A 272-amino-acid polypeptide reads, in one-letter code: R-spondin-3 (272 aa).

Positions 1-21 are cleaved as a signal peptide; that stretch reads MHLRLISWLFIILNFMEYIGS. 2 FU repeats span residues 35 to 86 and 92 to 135; these read PNVS…GYYG and INKC…GLEA. Asn-36 is a glycosylation site (N-linked (GlcNAc...) asparagine). Intrachain disulfides connect Cys-41–Cys-48, Cys-45–Cys-54, Cys-57–Cys-76, Cys-80–Cys-95, Cys-98–Cys-105, Cys-102–Cys-111, Cys-114–Cys-125, Cys-129–Cys-142, Cys-148–Cys-190, Cys-159–Cys-166, and Cys-199–Cys-206. A TSP type-1 domain is found at 147–207; the sequence is HCEVSEWNPW…KCTVQRKKCQ (61 aa). The tract at residues 201-272 is disordered; it reads VQRKKCQKGE…QKSVSVSTVH (72 aa). The span at 213–223 shows a compositional bias: basic residues; the sequence is KKGRERKRKKP. The span at 224–252 shows a compositional bias: basic and acidic residues; sequence NKGESKEAIPDSKSLESSKEIPEQRENKQ.

The protein belongs to the R-spondin family. Interacts with the extracellular domain of FZD8 and LRP6. It however does not form a ternary complex with FZD8 and LRP6. Interacts with WNT1. Binds heparin. Interacts with LGR4, LGR5 and LGR6. Ubiquitously expressed. Expressed at higher level in placenta, small intestine, fetal thymus and lymph node. Highly expressed in endothelial cells.

It localises to the secreted. Activator of the canonical Wnt signaling pathway by acting as a ligand for LGR4-6 receptors, which acts as a key regulator of angiogenesis. Upon binding to LGR4-6 (LGR4, LGR5 or LGR6), LGR4-6 associate with phosphorylated LRP6 and frizzled receptors that are activated by extracellular Wnt receptors, triggering the canonical Wnt signaling pathway to increase expression of target genes. Also regulates the canonical Wnt/beta-catenin-dependent pathway and non-canonical Wnt signaling by acting as an inhibitor of ZNRF3, an important regulator of the Wnt signaling pathway. Acts as a ligand for frizzled FZD8 and LRP6. May negatively regulate the TGF-beta pathway. Acts as a key regulator of angiogenesis by controlling vascular stability and pruning: acts by activating the non-canonical Wnt signaling pathway in endothelial cells. Can also amplify Wnt signaling pathway independently of LGR4-6 receptors, possibly by acting as a direct antagonistic ligand to RNF43 and ZNRF3. This is R-spondin-3 (RSPO3) from Homo sapiens (Human).